Reading from the N-terminus, the 154-residue chain is MAGKLQAHNIRIRTFIHATEDPEKVLEALETLFPEEISPKDVEFEVIETEGYFGNPILVVDAEIKHSRNIRKFLENLRGLLSKEDRKYLWEHAEEKVDETGTFYIRFDKQKAYLGEVKVSEGEDVIHVRIKVKAFPMKKEAVVKAVREWLEGED.

Homodimer in solution.

In vitro, binds efficiently double-stranded RNAs in a non-sequence specific manner. This is RNA-binding protein PAB1135 from Pyrococcus abyssi (strain GE5 / Orsay).